The following is a 489-amino-acid chain: Putative (R)-citramalate synthase CimA (489 aa).

The 253-residue stretch at 3–255 (VKILDTTLRD…KTKIKKERLY (253 aa)) folds into the Pyruvate carboxyltransferase domain.

It belongs to the alpha-IPM synthase/homocitrate synthase family. As to quaternary structure, homodimer.

The enzyme catalyses pyruvate + acetyl-CoA + H2O = (3R)-citramalate + CoA + H(+). It participates in amino-acid biosynthesis; L-isoleucine biosynthesis; 2-oxobutanoate from pyruvate: step 1/3. Catalyzes the condensation of pyruvate and acetyl-coenzyme A to form (R)-citramalate. The chain is Putative (R)-citramalate synthase CimA (cimA) from Archaeoglobus fulgidus (strain ATCC 49558 / DSM 4304 / JCM 9628 / NBRC 100126 / VC-16).